A 378-amino-acid chain; its full sequence is Putative F-box protein At5g51000 (378 aa).

The 47-residue stretch at 1 to 47 folds into the F-box domain; sequence MSTMSDLFPDLVEEILSRVPITSLKAVKLTCKQWNDLSKDSSFTKNH.

This is Putative F-box protein At5g51000 from Arabidopsis thaliana (Mouse-ear cress).